The following is a 142-amino-acid chain: Large ribosomal subunit protein uL13 (142 aa).

Belongs to the universal ribosomal protein uL13 family. In terms of assembly, part of the 50S ribosomal subunit.

In terms of biological role, this protein is one of the early assembly proteins of the 50S ribosomal subunit, although it is not seen to bind rRNA by itself. It is important during the early stages of 50S assembly. In Treponema pallidum (strain Nichols), this protein is Large ribosomal subunit protein uL13.